The chain runs to 422 residues: Synaptotagmin-1 (422 aa).

Topologically, residues 1–57 (MVSESHHEALAAPPVTTVATVLPHNATEPASPGEGKEDAFSKLKEKFMNELHKIPLP) are vesicular. Asparagine 25 carries N-linked (GlcNAc...) asparagine glycosylation. Residues 58-80 (PWALIAIAIVAVLLVLTCCFCIC) form a helical membrane-spanning segment. S-palmitoyl cysteine attachment occurs at residues cysteine 75, cysteine 76, cysteine 78, cysteine 80, and cysteine 83. The Cytoplasmic portion of the chain corresponds to 81–422 (KKCLFKKKNK…EVDAMLAVKK (342 aa)). A disordered region spans residues 113 to 142 (TMKDQALKDDDAETGLTDGEEKEEPKEEEK). The segment covering 122-134 (DDAETGLTDGEEK) has biased composition (acidic residues). Threonine 129 carries the phosphothreonine modification. The tract at residues 136 to 382 (EPKEEEKLGK…AIGKVFVGYN (247 aa)) is phospholipid binding. The region spanning 142–261 (KLGKLQYSLD…DFGHVTEEWR (120 aa)) is the C2 1 domain. Ca(2+) contacts are provided by leucine 172, aspartate 173, and aspartate 179. Tyrosine 230 carries the post-translational modification Phosphotyrosine. Aspartate 231, phenylalanine 232, aspartate 233, serine 236, lysine 237, and aspartate 239 together coordinate Ca(2+). Serine 265 bears the Phosphoserine mark. Residues 273–406 (KLGDICFSLR…NPRRPIAQWH (134 aa)) enclose the C2 2 domain. Aspartate 304 and aspartate 310 together coordinate Ca(2+). 2 positions are modified to phosphoserine: serine 343 and serine 345. Residues aspartate 364, aspartate 366, and aspartate 372 each contribute to the Ca(2+) site.

This sequence belongs to the synaptotagmin family. Homotetramer. Heterodimer; heterodimerizes with SYT2 in presence of calcium. Interacts with SCAMP5. Interacts with STON2. Forms a complex with SV2B, syntaxin 1 and SNAP25. Interacts with SV2A, SV2B and SV2C. Interacts with RIMS1. Interacts with PRRT2. Interacts with DNAJC5 in a phosphorylation-dependent manner. Interacts (via N-terminus) with RAB3A. Interacts with SYT12. Interacts with calmodulin. Interacts with DNM1 (via C-terminal proline-rich domain (PRD)); this interaction facilitates vesicle fission during clathrin-mediated endocytosis (CME). Ca(2+) serves as cofactor. In terms of processing, glycosylated.

The protein resides in the cytoplasmic vesicle. The protein localises to the secretory vesicle membrane. It is found in the secretory vesicle. It localises to the synaptic vesicle membrane. Its subcellular location is the chromaffin granule membrane. The protein resides in the cytoplasm. Functionally, calcium sensor that participates in triggering neurotransmitter release at the synapse. May have a regulatory role in the membrane interactions during trafficking of synaptic vesicles at the active zone of the synapse. It binds acidic phospholipids with a specificity that requires the presence of both an acidic head group and a diacyl backbone. A Ca(2+)-dependent interaction between synaptotagmin and putative receptors for activated protein kinase C has also been reported. It can bind to at least three additional proteins in a Ca(2+)-independent manner; these are neurexins, syntaxin and AP2. Plays a role in dendrite formation by melanocytes. This Bos taurus (Bovine) protein is Synaptotagmin-1.